Consider the following 217-residue polypeptide: Probable GTP-binding protein EngB (217 aa).

One can recognise an EngB-type G domain in the interval 29–213 (GPPEVAFAGR…RQAIAETVGI (185 aa)). GTP-binding positions include 37 to 44 (GRSNVGKS), 64 to 68 (GRTQE), 91 to 94 (DMPG), 158 to 161 (TKTD), and 192 to 194 (TSS). Mg(2+) contacts are provided by S44 and T66.

It belongs to the TRAFAC class TrmE-Era-EngA-EngB-Septin-like GTPase superfamily. EngB GTPase family. It depends on Mg(2+) as a cofactor.

Necessary for normal cell division and for the maintenance of normal septation. The protein is Probable GTP-binding protein EngB of Rhizobium etli (strain ATCC 51251 / DSM 11541 / JCM 21823 / NBRC 15573 / CFN 42).